The primary structure comprises 31 residues: MSDIN-like toxin proprotein 4 (31 aa).

Positions 1–10 are excised as a propeptide; that stretch reads MSDINGTRLP. The cyclopeptide (Trp-Pro) cross-link spans 11–16; the sequence is WLATCP. The propeptide occupies 17-31; the sequence is CVGEDVNPTLSRGER.

Belongs to the MSDIN fungal toxin family. Post-translationally, processed by the macrocyclase-peptidase enzyme POPB to yield a toxic cyclic hexapeptide. POPB first removes 10 residues from the N-terminus. Conformational trapping of the remaining peptide forces the enzyme to release this intermediate rather than proceed to macrocyclization. The enzyme rebinds the remaining peptide in a different conformation and catalyzes macrocyclization of the N-terminal 6 residues.

Its function is as follows. Probable toxin that belongs to the MSDIN-like toxin family responsible for a large number of food poisoning cases and deaths. This Amanita phalloides (Death cap) protein is MSDIN-like toxin proprotein 4.